The primary structure comprises 374 residues: O-methyltransferase 16 (374 aa).

Residues S195, G219, D242, D262, and K276 each coordinate S-adenosyl-L-homocysteine. D242 provides a ligand contact to S-adenosyl-L-methionine. H280 serves as the catalytic Proton acceptor.

Belongs to the class I-like SAM-binding methyltransferase superfamily. Cation-independent O-methyltransferase family. In terms of assembly, homodimer. Expressed mainly in vasculature and cortex tissues at low levels.

It carries out the reaction dopamine + S-adenosyl-L-methionine = 4-methoxytyramine + S-adenosyl-L-homocysteine + H(+). The protein operates within aromatic compound metabolism. Its pathway is alkaloid biosynthesis. Functionally, O-methyltransferase participating in the biosynthesis of natural products derived from phenylethylamine, including mescaline, a natural hallucinogen potentially used in psychotherapeutic treatments. Catalyzes the O-methylation of dopamine to produce 4-methoxytyramine. The polypeptide is O-methyltransferase 16 (Lophophora williamsii (Peyote)).